Here is a 494-residue protein sequence, read N- to C-terminus: Guanosine-5'-triphosphate,3'-diphosphate pyrophosphatase (494 aa).

Belongs to the GppA/Ppx family. GppA subfamily.

It carries out the reaction guanosine 3'-diphosphate 5'-triphosphate + H2O = guanosine 3',5'-bis(diphosphate) + phosphate + H(+). The protein operates within purine metabolism; ppGpp biosynthesis; ppGpp from GTP: step 2/2. Functionally, catalyzes the conversion of pppGpp to ppGpp. Guanosine pentaphosphate (pppGpp) is a cytoplasmic signaling molecule which together with ppGpp controls the 'stringent response', an adaptive process that allows bacteria to respond to amino acid starvation, resulting in the coordinated regulation of numerous cellular activities. The sequence is that of Guanosine-5'-triphosphate,3'-diphosphate pyrophosphatase from Escherichia coli (strain 55989 / EAEC).